Here is a 131-residue protein sequence, read N- to C-terminus: Small ribosomal subunit protein uS12 (131 aa).

Positions 1–32 (MPTFSQLVRKGRTAPRYKTASPALQGSPQRRG) are disordered. D89 carries the 3-methylthioaspartic acid modification. Residues 110–131 (RKQGRSKYGAKRAKGGAAAGKK) are disordered. The span at 111–131 (KQGRSKYGAKRAKGGAAAGKK) shows a compositional bias: basic residues.

The protein belongs to the universal ribosomal protein uS12 family. In terms of assembly, part of the 30S ribosomal subunit. Contacts proteins S8 and S17. May interact with IF1 in the 30S initiation complex.

With S4 and S5 plays an important role in translational accuracy. In terms of biological role, interacts with and stabilizes bases of the 16S rRNA that are involved in tRNA selection in the A site and with the mRNA backbone. Located at the interface of the 30S and 50S subunits, it traverses the body of the 30S subunit contacting proteins on the other side and probably holding the rRNA structure together. The combined cluster of proteins S8, S12 and S17 appears to hold together the shoulder and platform of the 30S subunit. This Acidobacterium capsulatum (strain ATCC 51196 / DSM 11244 / BCRC 80197 / JCM 7670 / NBRC 15755 / NCIMB 13165 / 161) protein is Small ribosomal subunit protein uS12.